We begin with the raw amino-acid sequence, 447 residues long: Asparagine--tRNA ligase (447 aa).

The protein belongs to the class-II aminoacyl-tRNA synthetase family. Homodimer.

The protein resides in the cytoplasm. The enzyme catalyses tRNA(Asn) + L-asparagine + ATP = L-asparaginyl-tRNA(Asn) + AMP + diphosphate + H(+). The polypeptide is Asparagine--tRNA ligase (Lactococcus lactis subsp. cremoris (strain MG1363)).